We begin with the raw amino-acid sequence, 897 residues long: Staphylococcal nuclease domain-containing protein 1 (897 aa).

TNase-like domains are found at residues 18 to 167 (QLQR…LWSE), 194 to 329 (KPVN…IWKD), 342 to 499 (RQFV…LHSK), and 528 to 663 (GRSE…LWAN). The Tudor domain occupies 732–790 (APRRGEFCIAKFADGEWYRARVEKVESPAKVHVFYIDYGNREVLSSTRLAALPPAFSTR).

It localises to the cytoplasm. This chain is Staphylococcal nuclease domain-containing protein 1 (snd1), found in Danio rerio (Zebrafish).